Consider the following 153-residue polypeptide: Large ribosomal subunit protein uL22 (153 aa).

It belongs to the universal ribosomal protein uL22 family. Part of the 50S ribosomal subunit.

Functionally, this protein binds specifically to 23S rRNA. It makes multiple contacts with different domains of the 23S rRNA in the assembled 50S subunit and ribosome. Its function is as follows. The globular domain of the protein is located near the polypeptide exit tunnel on the outside of the subunit, while an extended beta-hairpin is found that lines the wall of the exit tunnel in the center of the 70S ribosome. The sequence is that of Large ribosomal subunit protein uL22 from Methanocella arvoryzae (strain DSM 22066 / NBRC 105507 / MRE50).